The primary structure comprises 168 residues: Leukotoxin-activating lysine-acyltransferase LtxC (168 aa).

Active-site residues include His-23 and Asp-92.

This sequence belongs to the RTX toxin acyltransferase family.

Its subcellular location is the cytoplasm. The catalysed reaction is a fatty acyl-[ACP] + L-lysyl-[protein] = N(6)-(fatty acyl)-L-lysyl-[protein] + holo-[ACP] + H(+). Its function is as follows. Required for full activity and modification of the LtxA leukotoxin. Involved in fatty acid modification of the protoxin at two internal lysine residues, thereby converting it to the active toxin. This Aggregatibacter actinomycetemcomitans (Actinobacillus actinomycetemcomitans) protein is Leukotoxin-activating lysine-acyltransferase LtxC.